The primary structure comprises 444 residues: Prenyltransferase phnF (444 aa).

This sequence belongs to the tryptophan dimethylallyltransferase family.

The enzyme catalyses 2,3,4,7,9-pentahydroxy-6-methyl-1H-phenalen-1-one + dimethylallyl diphosphate = 2,4,7,9-tetrahydroxy-6-methyl-8-(2-methylbut-3-en-2-yl)-1-oxo-1H-phenalen-3-ol + diphosphate. It functions in the pathway secondary metabolite biosynthesis. Its function is as follows. Prenyltransferase; part of the gene cluster that mediates the biosynthesis of phenalenones such as herqueinone, compounds that have been reported to treat tumors, bacterial infections and/or mycoses, and rheumatic diseases. The non-reducing polyketide synthase phnA synthesizes the heptaketide backbone and cyclizes it into the angular, hemiketal-containing naphtho-gamma-pyrone prephenalenone. The product template (PT) domain of phnA catalyzes only the C4-C9 aldol condensation, which is unprecedented among known PT domains. The transformation of prephenalenone to phenalenones requires an FAD-dependent monooxygenase phnB, which catalyzes the C2 aromatic hydroxylation of prephenalenone and ring opening of the gamma-pyrone ring simultaneously. Subsequent intramolecular deprotonation of C3 phenolic oxygen accelerates phenalenone ring closure to yield the tricyclic phenalenone core with a C2 hydroxylation. The prenyltransferase phnF further catalyzes reverse C-prenylation of phenalenone by direct electrophilic substitution at C6, or possibly via first a forward O-prenylation of a neighboring phenol in phenalenone, followed by a Claisen rearrangement. The hydroalkoxylation enzyme phnH catalyzes the 5-exo-trig cyclization via acid catalysis after the spontaneous deprotonation of 7-OH, which leads to the formation of the dihydrobenzofuran atrovenetin. Atrovenetin is further converted to deoxyherqueinone by the O-methyltransferase phnC which can methylate C2-OH to stabilize the northern portion of the phenalenone core. Finally, the oxidoreductase phnG converts deoxyherqueinone to herqueinone via C6 hydroxylation. The sequence is that of Prenyltransferase phnF from Penicillium herquei.